A 126-amino-acid chain; its full sequence is Holo-[acyl-carrier-protein] synthase (126 aa).

2 residues coordinate Mg(2+): Asp9 and Glu58.

This sequence belongs to the P-Pant transferase superfamily. AcpS family. Requires Mg(2+) as cofactor.

The protein localises to the cytoplasm. It catalyses the reaction apo-[ACP] + CoA = holo-[ACP] + adenosine 3',5'-bisphosphate + H(+). In terms of biological role, transfers the 4'-phosphopantetheine moiety from coenzyme A to a Ser of acyl-carrier-protein. The protein is Holo-[acyl-carrier-protein] synthase of Salmonella agona (strain SL483).